Here is a 505-residue protein sequence, read N- to C-terminus: Glycerol kinase (505 aa).

Residue T14 coordinates ADP. ATP-binding residues include T14, T15, and S16. T14 serves as a coordination point for sn-glycerol 3-phosphate. R18 is an ADP binding site. Sn-glycerol 3-phosphate contacts are provided by R84, E85, Y136, and D246. R84, E85, Y136, D246, and Q247 together coordinate glycerol. Residues T268 and G311 each contribute to the ADP site. ATP is bound by residues T268, G311, Q315, and G412. ADP contacts are provided by G412 and N416.

Belongs to the FGGY kinase family.

The catalysed reaction is glycerol + ATP = sn-glycerol 3-phosphate + ADP + H(+). It functions in the pathway polyol metabolism; glycerol degradation via glycerol kinase pathway; sn-glycerol 3-phosphate from glycerol: step 1/1. With respect to regulation, inhibited by fructose 1,6-bisphosphate (FBP). In terms of biological role, key enzyme in the regulation of glycerol uptake and metabolism. Catalyzes the phosphorylation of glycerol to yield sn-glycerol 3-phosphate. The sequence is that of Glycerol kinase from Vibrio parahaemolyticus serotype O3:K6 (strain RIMD 2210633).